The following is a 210-amino-acid chain: Somatotropin (210 aa).

An N-terminal signal peptide occupies residues 1 to 22 (MAKALVLLSLVLVSVFVNNGTA). A Zn(2+)-binding site is contributed by H38. A disulfide bond links C71 and C183. E192 contacts Zn(2+). The cysteines at positions 200 and 208 are disulfide-linked.

Belongs to the somatotropin/prolactin family.

Its subcellular location is the secreted. In terms of biological role, growth hormone plays an important role in growth control and is involved in the regulation of several anabolic processes. Implicated as an osmoregulatory substance important for seawater adaptation. The polypeptide is Somatotropin (gh) (Misgurnus mizolepis (Chinese weatherloach)).